Consider the following 142-residue polypeptide: Large ribosomal subunit protein uL22 (142 aa).

The disordered stretch occupies residues Arg122 to Ala142.

Belongs to the universal ribosomal protein uL22 family. In terms of assembly, part of the 50S ribosomal subunit.

In terms of biological role, this protein binds specifically to 23S rRNA; its binding is stimulated by other ribosomal proteins, e.g. L4, L17, and L20. It is important during the early stages of 50S assembly. It makes multiple contacts with different domains of the 23S rRNA in the assembled 50S subunit and ribosome. Functionally, the globular domain of the protein is located near the polypeptide exit tunnel on the outside of the subunit, while an extended beta-hairpin is found that lines the wall of the exit tunnel in the center of the 70S ribosome. The polypeptide is Large ribosomal subunit protein uL22 (Gluconobacter oxydans (strain 621H) (Gluconobacter suboxydans)).